Reading from the N-terminus, the 237-residue chain is Uridylate kinase (237 aa).

12–15 (KISG) is a binding site for ATP. Residue Gly54 coordinates UMP. ATP contacts are provided by Gly55 and Arg59. UMP is bound by residues Asp72 and 133 to 140 (TGNPFFST). Positions 166 and 169 each coordinate ATP.

The protein belongs to the UMP kinase family. As to quaternary structure, homohexamer.

The protein resides in the cytoplasm. The catalysed reaction is UMP + ATP = UDP + ADP. Its pathway is pyrimidine metabolism; CTP biosynthesis via de novo pathway; UDP from UMP (UMPK route): step 1/1. With respect to regulation, inhibited by UTP. Its function is as follows. Catalyzes the reversible phosphorylation of UMP to UDP. The protein is Uridylate kinase of Caldanaerobacter subterraneus subsp. tengcongensis (strain DSM 15242 / JCM 11007 / NBRC 100824 / MB4) (Thermoanaerobacter tengcongensis).